The following is a 452-amino-acid chain: Probable receptor-like protein kinase At5g20050 (452 aa).

Residues methionine 1–alanine 23 form the signal peptide. The Extracellular portion of the chain corresponds to alanine 24–threonine 33. Residues phenylalanine 34–isoleucine 54 form a helical membrane-spanning segment. Residues arginine 55–arginine 452 are Cytoplasmic-facing. Positions aspartate 103–valine 392 constitute a Protein kinase domain. ATP contacts are provided by residues isoleucine 109–valine 117 and lysine 131. At tyrosine 178 the chain carries Phosphotyrosine. Aspartate 236 serves as the catalytic Proton acceptor. 2 positions are modified to phosphothreonine: threonine 270 and threonine 275.

Belongs to the protein kinase superfamily. Ser/Thr protein kinase family.

Its subcellular location is the membrane. The enzyme catalyses L-seryl-[protein] + ATP = O-phospho-L-seryl-[protein] + ADP + H(+). The catalysed reaction is L-threonyl-[protein] + ATP = O-phospho-L-threonyl-[protein] + ADP + H(+). This Arabidopsis thaliana (Mouse-ear cress) protein is Probable receptor-like protein kinase At5g20050.